A 142-amino-acid chain; its full sequence is Large ribosomal subunit protein uL11 (142 aa).

This sequence belongs to the universal ribosomal protein uL11 family. In terms of assembly, part of the ribosomal stalk of the 50S ribosomal subunit. Interacts with L10 and the large rRNA to form the base of the stalk. L10 forms an elongated spine to which L12 dimers bind in a sequential fashion forming a multimeric L10(L12)X complex. One or more lysine residues are methylated.

In terms of biological role, forms part of the ribosomal stalk which helps the ribosome interact with GTP-bound translation factors. The chain is Large ribosomal subunit protein uL11 from Idiomarina loihiensis (strain ATCC BAA-735 / DSM 15497 / L2-TR).